Reading from the N-terminus, the 401-residue chain is uncharacterized protein (401 aa).

The next 10 helical transmembrane spans lie at 20–40 (FFGE…MVLY), 49–69 (IMMP…LTLA), 83–100 (ILTA…FVFA), 104–121 (YVFA…SLYI), 140–160 (VFAV…LVGM), 167–187 (PVWI…IAAL), 207–227 (FTIY…SMLY), 248–268 (MLTI…VPLV), 289–309 (LAAA…TAAV), and 357–377 (GLIL…VCLL).

Belongs to the major facilitator superfamily.

The protein localises to the cell membrane. This is an uncharacterized protein from Bacillus subtilis (strain 168).